Consider the following 352-residue polypeptide: Phospho-N-acetylmuramoyl-pentapeptide-transferase (352 aa).

10 helical membrane passes run 10–30 (YMFFSYISVRAGFAFFIALFL), 67–87 (TMGGLIFIFATIVASLLCADL), 88–108 (NNFYVIIGILCLVLFCTIGLV), 129–149 (LLSQFIASFICVFFLYIMGIN), 159–179 (YALFDGGIFMLALWILVIISS), 191–211 (GLATVPSIFSLLSLSAFLYLS), 227–247 (GLGELVVLSAALVGALMGFLW), 255–275 (VFMGDSGSLSIGAFLGYLGIV), 280–300 (ILLLLIGFVFVLETISVILQV), and 329–349 (KIIVRFWMIALLANIIALISI).

The protein belongs to the glycosyltransferase 4 family. MraY subfamily. Requires Mg(2+) as cofactor.

It localises to the cell inner membrane. It carries out the reaction UDP-N-acetyl-alpha-D-muramoyl-L-alanyl-gamma-D-glutamyl-meso-2,6-diaminopimeloyl-D-alanyl-D-alanine + di-trans,octa-cis-undecaprenyl phosphate = di-trans,octa-cis-undecaprenyl diphospho-N-acetyl-alpha-D-muramoyl-L-alanyl-D-glutamyl-meso-2,6-diaminopimeloyl-D-alanyl-D-alanine + UMP. It functions in the pathway cell wall biogenesis; peptidoglycan biosynthesis. Functionally, catalyzes the initial step of the lipid cycle reactions in the biosynthesis of the cell wall peptidoglycan: transfers peptidoglycan precursor phospho-MurNAc-pentapeptide from UDP-MurNAc-pentapeptide onto the lipid carrier undecaprenyl phosphate, yielding undecaprenyl-pyrophosphoryl-MurNAc-pentapeptide, known as lipid I. The sequence is that of Phospho-N-acetylmuramoyl-pentapeptide-transferase from Campylobacter lari (strain RM2100 / D67 / ATCC BAA-1060).